A 190-amino-acid chain; its full sequence is MAMLTISLLLCAAVALNGATVLELFQDFEQALHLGAKGEDERVVAAENRNQCPTGWFQFGSRCFMFVETARSWPLAERHCVSLGANLASVHSSAEYQFLQEVVASKTGGFSTPWIGGFDAVQDRLWFWSDGSEFDYQNWKKGEPNNSGGREPCIVINWRDEYRWNDINCGNSFPSGVLQKNVEIQKNEPT.

The first 18 residues, 1 to 18, serve as a signal peptide directing secretion; sequence MAMLTISLLLCAAVALNG. The region spanning 60-179 is the C-type lectin domain; sequence GSRCFMFVET…GNSFPSGVLQ (120 aa). An intrachain disulfide couples Cys-153 to Cys-169.

In terms of assembly, multimeric. In terms of tissue distribution, expressed in cells of the branchial epithelium, hepatic sinusoids, biliary epithelium, renal interstitium, skin, and sub-mucosal granular layer of the intestine. Highly expressed in caudal kidney. Moderately expressed in liver. Weakly expressed in gill, spleen, cranial kidney and skin. Isoform 1 is highly expressed in intestine. Isoform 2 is weakly expressed in intestine.

Its function is as follows. Lectin that binds sepharose in a calcium-dependent manner. The protein is Ladderlectin of Oncorhynchus mykiss (Rainbow trout).